A 340-amino-acid polypeptide reads, in one-letter code: uncharacterized protein (340 aa).

Helical transmembrane passes span 162–182 (PLVPLVAGPLPVAFFIGVLAG) and 239–259 (FWISLYFPLTMRSLCNAIVVP).

It localises to the cell membrane. This is an uncharacterized protein from Mycobacterium bovis (strain ATCC BAA-935 / AF2122/97).